The following is a 143-amino-acid chain: Transcriptional regulator MraZ (143 aa).

SpoVT-AbrB domains are found at residues 5–47 and 76–119; these read EYQH…PLNE and ATEC…SDER.

The protein belongs to the MraZ family. In terms of assembly, forms oligomers.

The protein resides in the cytoplasm. It localises to the nucleoid. This Enterococcus faecalis (strain ATCC 700802 / V583) protein is Transcriptional regulator MraZ.